The following is a 483-amino-acid chain: MHQLTLAEIARGLADKSFSSEELTGALLARIQQLDPQLNSFISVTEELALGQARAADARRAAGETGALLGAPIAHKDLFCTNGVRTSCGSKMLDNFKAPYDATVVAKLAEAGMVTLGKTNMDEFAMGSANESSHYGAVKNPWNLEHVPGGSSGGSAAAVAARLLPATTGTDTGGSIRQPAALTNLTGLKPTYGRVSRWGMIAYASSLDQGGPLARTAEDCALLLQGMAGFDAKDSTSIDEPVPDYSANLNASLQGLRIGLPKEYFGAGLDPRIAELVQASVKELEKLGAVVKEISLPNMQHAIPAYYVIAPAEASSNLSRFDGVRFGYRCDEPKDLTDLYKRSRGEGFGAEVQRRIMVGTYALSAGYYDAYYVKAQQIRRLIKNDFMAAFEGVDLILGPTTPNPAWKLGAKSSDPVAAYLEDVYTITANLAGLPGLSMPAGFVDGLPVGVQLLAPYFQEGRLLNVAHRYQQVTDWHTRAPNGF.

Active-site charge relay system residues include lysine 76 and serine 151. Catalysis depends on serine 175, which acts as the Acyl-ester intermediate.

Belongs to the amidase family. GatA subfamily. In terms of assembly, heterotrimer of A, B and C subunits.

It carries out the reaction L-glutamyl-tRNA(Gln) + L-glutamine + ATP + H2O = L-glutaminyl-tRNA(Gln) + L-glutamate + ADP + phosphate + H(+). Functionally, allows the formation of correctly charged Gln-tRNA(Gln) through the transamidation of misacylated Glu-tRNA(Gln) in organisms which lack glutaminyl-tRNA synthetase. The reaction takes place in the presence of glutamine and ATP through an activated gamma-phospho-Glu-tRNA(Gln). The sequence is that of Glutamyl-tRNA(Gln) amidotransferase subunit A from Pseudomonas putida (strain W619).